Consider the following 862-residue polypeptide: Leucine--tRNA ligase (862 aa).

The 'HIGH' region motif lies at 51 to 61; the sequence is PYPSGSLHMGH. The 'KMSKS' region signature appears at 624–628; the sequence is KMSKS. Lys-627 contributes to the ATP binding site.

This sequence belongs to the class-I aminoacyl-tRNA synthetase family.

It localises to the cytoplasm. It carries out the reaction tRNA(Leu) + L-leucine + ATP = L-leucyl-tRNA(Leu) + AMP + diphosphate. This chain is Leucine--tRNA ligase, found in Prochlorococcus marinus (strain NATL2A).